The primary structure comprises 147 residues: D-aminoacyl-tRNA deacylase (147 aa).

The short motif at 137-138 is the Gly-cisPro motif, important for rejection of L-amino acids element; the sequence is GP.

It belongs to the DTD family. In terms of assembly, homodimer.

It is found in the cytoplasm. It catalyses the reaction glycyl-tRNA(Ala) + H2O = tRNA(Ala) + glycine + H(+). The catalysed reaction is a D-aminoacyl-tRNA + H2O = a tRNA + a D-alpha-amino acid + H(+). In terms of biological role, an aminoacyl-tRNA editing enzyme that deacylates mischarged D-aminoacyl-tRNAs. Also deacylates mischarged glycyl-tRNA(Ala), protecting cells against glycine mischarging by AlaRS. Acts via tRNA-based rather than protein-based catalysis; rejects L-amino acids rather than detecting D-amino acids in the active site. By recycling D-aminoacyl-tRNA to D-amino acids and free tRNA molecules, this enzyme counteracts the toxicity associated with the formation of D-aminoacyl-tRNA entities in vivo and helps enforce protein L-homochirality. The chain is D-aminoacyl-tRNA deacylase from Acinetobacter baumannii (strain AYE).